Here is a 252-residue protein sequence, read N- to C-terminus: Large ribosomal subunit protein uL4 (252 aa).

The protein belongs to the universal ribosomal protein uL4 family. As to quaternary structure, part of the 50S ribosomal subunit.

Functionally, one of the primary rRNA binding proteins, this protein initially binds near the 5'-end of the 23S rRNA. It is important during the early stages of 50S assembly. It makes multiple contacts with different domains of the 23S rRNA in the assembled 50S subunit and ribosome. In terms of biological role, forms part of the polypeptide exit tunnel. The protein is Large ribosomal subunit protein uL4 of Archaeoglobus fulgidus (strain ATCC 49558 / DSM 4304 / JCM 9628 / NBRC 100126 / VC-16).